A 1221-amino-acid chain; its full sequence is MIDVNKFESMQIGLASPNKIRSWSYGEVKKPETINYRTLKPEKDGLFDERIFGPTKDYACACGKYKGVRYKGIVCDRCGVEVTTSHVRRERMGHIELAAPVTHIWYFKGIPSRMGLVLDVSPKQLEEVIYFAAYIVIDPGDTGLEAKQLLTEAEYREEKAKYGNRFVAKMGAEAIRDLLKQVDLDKEVTALKAELQTLKGQKRTRAIRRLDILDAFRNSGNKPEWMVMETVPVIPPDLRPMVQLEGGRFATSDLNDLYRRVINRNNRLKKLLDMHAPGLIVQNEERMLQEAVDALIDNGRRGRPVVGPGNRPLKSISHMLKGKQGRFRQNLLGKRVDYSGRSVIDVSPELKFYQCGVPRPMALELFKPFVMRELVRRGIASNIKNAKRKIDREDDDIWDVLEYVIKERPVLLNRAPTLHRLSIQAFEPVLVPGKALRLHPLACEAYNADFDGDQMAIHVPLSDEAVAESRLLMLAAHHILTPKDGTPIVTPSQDIVLGNYWLTQAEIGREGEGMIFATPEEATIAYNNGDIHYHTIIGVSAASMPKKDWGAGHEDSIFVTTYGRLVFNSLFPDDYFYINEPTQDNLKQPMADKYFLEDGQDIQDKIAEIGQDLVATPFKKGFLGDTISEIYKRYRVQRTSEYLDDLKEMGYSASTISGLTIGMADIPETKTKDALVAEARKQVKQVSKMFRRGKLSDKERHDNIIKIWTDCKDAVQQEIAEFKDQKNPISVMQQSGARGNISNFTQLAGMRGLMATPSGELFEIPVISNFKEGLTVLELFMSTHGARKGMTDTALKTAQSGYLTRRLVDVAQDVIIREDDCGTDRGITAKAIVDKDAGLIESLYDRLVGRFTNRTIRDPQTGEVICSKGVLMDEQMAQKIVDAGVQEVQIRSILTCNTSHGICRKCYGRNLATAEEVEIGEAVGTVAAQSIGEPGTQLTLRTFHTGGVAGAEDITQGLPRVQELFEARNPKGRAVISEVDGVVDKIESNAAEHLQEITVKGKIDTRVYTIPYTAKPAVQEGDEIHRGDKLIPGSIDPKELIKVTDTLTTEEYILAEVQKSYRTQGVDLADKHAEVLTRQVLQKVRVLDPGETDILPGEVMDIAEFRDRNRDVIISGGIPATAQAYILGITKAALETNSFLSAASFQETTRVLTDASIRGKNDPLLGLKENVIIGKIIPAGTGMPIYRDQVPKADVQQPDSVYSIADLEKKMEDENKETESK.

The Zn(2+) site is built by cysteine 60, cysteine 62, cysteine 75, and cysteine 78. The Mg(2+) site is built by aspartate 449, aspartate 451, and aspartate 453. Residues cysteine 821, cysteine 896, cysteine 903, and cysteine 906 each contribute to the Zn(2+) site.

This sequence belongs to the RNA polymerase beta' chain family. As to quaternary structure, the RNAP catalytic core consists of 2 alpha, 1 beta, 1 beta' and 1 omega subunit. When a sigma factor is associated with the core the holoenzyme is formed, which can initiate transcription. Mg(2+) is required as a cofactor. It depends on Zn(2+) as a cofactor.

The enzyme catalyses RNA(n) + a ribonucleoside 5'-triphosphate = RNA(n+1) + diphosphate. In terms of biological role, DNA-dependent RNA polymerase catalyzes the transcription of DNA into RNA using the four ribonucleoside triphosphates as substrates. This chain is DNA-directed RNA polymerase subunit beta', found in Lactobacillus delbrueckii subsp. bulgaricus (strain ATCC BAA-365 / Lb-18).